Consider the following 581-residue polypeptide: Arginine--tRNA ligase (581 aa).

The 'HIGH' region motif lies at 126–136 (PNLAKEMHVGH).

This sequence belongs to the class-I aminoacyl-tRNA synthetase family. In terms of assembly, monomer.

Its subcellular location is the cytoplasm. The catalysed reaction is tRNA(Arg) + L-arginine + ATP = L-arginyl-tRNA(Arg) + AMP + diphosphate. This Shewanella oneidensis (strain ATCC 700550 / JCM 31522 / CIP 106686 / LMG 19005 / NCIMB 14063 / MR-1) protein is Arginine--tRNA ligase.